Reading from the N-terminus, the 222-residue chain is MASDVSSHLLTVTQSRWTIHHMYNKLLILALFTPVILESIIYVSGPQGGNVTLVSNFTSNISARWFRWDGNDSHLICFYKRGEGLSTPYVGLSLSCAANQITIFNLTLNDSGRYGAEGFTRSGENETFLWYNLTVKPKPLETTTASNVTTIVTTTPTVIGTKSNVTGNASLAPQLRAVAGFLNQTPRENNTHLALVGVIVFIALIVVCIMGWWKLLCSKPKL.

N-linked (GlcNAc...) asparagine; by host glycans are attached at residues Asn-50, Asn-56, Asn-60, Asn-71, Asn-105, Asn-109, Asn-125, Asn-132, Asn-147, Asn-164, Asn-168, and Asn-189. The helical transmembrane segment at 193 to 213 (LALVGVIVFIALIVVCIMGWW) threads the bilayer.

It belongs to the RL11 family. Interacts with host FLT3. In terms of processing, highly glycosylated.

It localises to the secreted. Its subcellular location is the host cell membrane. Plays a role in modulating the host immune response and affecting host cytokine production. Structurally and functionally homolog of host CEACAM1, induces endothelial cell angiogenesis. Ligands for host FLT3 receptor, activates the PI3K/AKT and MAPK/ERK pathways. In turn, triggers hematopoietic progenitor cell and monocyte differentiation leading to virus reactivation. This Human cytomegalovirus (strain AD169) (HHV-5) protein is CEACAM1-like protein UL7 (UL7).